Reading from the N-terminus, the 362-residue chain is Phospho-N-acetylmuramoyl-pentapeptide-transferase (362 aa).

Helical transmembrane passes span 28–48 (IISF…VITW), 72–92 (TPTM…MVCA), 94–114 (LSNI…ILGL), 131–151 (VLHK…IIFM), 169–189 (FMPQ…VGTS), 200–220 (GLAI…AWIS), 236–256 (FSGE…GFLW), 264–284 (IFMG…IAVL), 290–310 (LLLI…LQVI), and 339–359 (IIVR…ITLK).

The protein belongs to the glycosyltransferase 4 family. MraY subfamily. The cofactor is Mg(2+).

It is found in the cell inner membrane. It carries out the reaction UDP-N-acetyl-alpha-D-muramoyl-L-alanyl-gamma-D-glutamyl-meso-2,6-diaminopimeloyl-D-alanyl-D-alanine + di-trans,octa-cis-undecaprenyl phosphate = di-trans,octa-cis-undecaprenyl diphospho-N-acetyl-alpha-D-muramoyl-L-alanyl-D-glutamyl-meso-2,6-diaminopimeloyl-D-alanyl-D-alanine + UMP. It functions in the pathway cell wall biogenesis; peptidoglycan biosynthesis. In terms of biological role, catalyzes the initial step of the lipid cycle reactions in the biosynthesis of the cell wall peptidoglycan: transfers peptidoglycan precursor phospho-MurNAc-pentapeptide from UDP-MurNAc-pentapeptide onto the lipid carrier undecaprenyl phosphate, yielding undecaprenyl-pyrophosphoryl-MurNAc-pentapeptide, known as lipid I. The sequence is that of Phospho-N-acetylmuramoyl-pentapeptide-transferase from Blochmanniella pennsylvanica (strain BPEN).